The following is an 870-amino-acid chain: S-linalool synthase (870 aa).

Mg(2+) contacts are provided by Asp-547, Asp-551, Asn-689, Ser-693, and Glu-697. The DDXXD motif signature appears at 547-551 (DDFFD).

It belongs to the terpene synthase family. Mg(2+) is required as a cofactor. Mn(2+) serves as cofactor. Highly expressed in cells of the transmitting tract of the stigma and style and in the epidermal cells of petals, as well as in stamens.

The catalysed reaction is (2E)-geranyl diphosphate + H2O = (S)-linalool + diphosphate. Involved in the biosynthesis of the acyclic monoterpene S-linalool, a major component of the strong sweet scent of the C.breweri flowers. This is S-linalool synthase (LIS) from Clarkia breweri (Fairy fans).